The primary structure comprises 475 residues: Cytosolic non-specific dipeptidase (475 aa).

S58 carries the phosphoserine modification. Residue H99 participates in Mn(2+) binding. The active site involves D101. Position 132 (D132) interacts with Mn(2+). E166 acts as the Proton acceptor in catalysis. Substrate-binding positions include 166-167, D195, and H228; that span reads EE. E167 and D195 together coordinate Mn(2+). S299 carries the post-translational modification Phosphoserine. Substrate-binding residues include T330, R343, S417, and H445. H445 lines the Mn(2+) pocket.

Belongs to the peptidase M20A family. Homodimer. Requires Mn(2+) as cofactor. As to expression, highly expressed in the parafascicular nucleus of the thalamus, tuberomammillary nucleus of the hypothalamus and the mitral cell layer of the olfactory bulb.

The protein localises to the cytoplasm. It carries out the reaction Hydrolysis of dipeptides, preferentially hydrophobic dipeptides including prolyl amino acids.. It catalyses the reaction L-threonyl-L-threonine + H2O = 2 L-threonine. The enzyme catalyses L-threonyl-L-serine + H2O = L-threonine + L-serine. The catalysed reaction is L-seryl-L-threonine + H2O = L-threonine + L-serine. It carries out the reaction L-cysteinylglycine + H2O = L-cysteine + glycine. It catalyses the reaction L-alanyl-L-cysteine + H2O = L-cysteine + L-alanine. The enzyme catalyses (S)-lactate + L-phenylalanine = N-[(S)-lactoyl]-L-phenylalanine + H2O. With respect to regulation, inhibited by bestatin. In terms of biological role, catalyzes the peptide bond hydrolysis in dipeptides, displaying a non-redundant activity toward threonyl dipeptides. Mediates threonyl dipeptide catabolism in a tissue-specific way. Has high dipeptidase activity toward cysteinylglycine, an intermediate metabolite in glutathione metabolism. Metabolizes N-lactoyl-amino acids, both through hydrolysis to form lactic acid and amino acids, as well as through their formation by reverse proteolysis. Plays a role in the regulation of cell cycle arrest and apoptosis. The sequence is that of Cytosolic non-specific dipeptidase (Cndp2) from Mus musculus (Mouse).